The primary structure comprises 162 residues: Small ribosomal subunit protein uS13 (162 aa).

The segment at 142–162 is disordered; it reads RGQRTKSTGRRGSTVGVSRKK.

This sequence belongs to the universal ribosomal protein uS13 family. As to quaternary structure, part of the 30S ribosomal subunit. Forms a loose heterodimer with protein S19. Forms two bridges to the 50S subunit in the 70S ribosome.

In terms of biological role, located at the top of the head of the 30S subunit, it contacts several helices of the 16S rRNA. In the 70S ribosome it contacts the 23S rRNA (bridge B1a) and protein L5 of the 50S subunit (bridge B1b), connecting the 2 subunits; these bridges are implicated in subunit movement. The protein is Small ribosomal subunit protein uS13 of Methanosarcina acetivorans (strain ATCC 35395 / DSM 2834 / JCM 12185 / C2A).